Here is a 510-residue protein sequence, read N- to C-terminus: ATP synthase subunit alpha (510 aa).

169–176 (GDRQTGKT) provides a ligand contact to ATP.

The protein belongs to the ATPase alpha/beta chains family. F-type ATPases have 2 components, CF(1) - the catalytic core - and CF(0) - the membrane proton channel. CF(1) has five subunits: alpha(3), beta(3), gamma(1), delta(1), epsilon(1). CF(0) has three main subunits: a(1), b(2) and c(9-12). The alpha and beta chains form an alternating ring which encloses part of the gamma chain. CF(1) is attached to CF(0) by a central stalk formed by the gamma and epsilon chains, while a peripheral stalk is formed by the delta and b chains.

It is found in the cell membrane. It catalyses the reaction ATP + H2O + 4 H(+)(in) = ADP + phosphate + 5 H(+)(out). Functionally, produces ATP from ADP in the presence of a proton gradient across the membrane. The alpha chain is a regulatory subunit. In Thermomicrobium roseum (strain ATCC 27502 / DSM 5159 / P-2), this protein is ATP synthase subunit alpha.